A 99-amino-acid chain; its full sequence is Large ribosomal subunit protein bL28 (99 aa).

This sequence belongs to the bacterial ribosomal protein bL28 family.

In Rhizobium leguminosarum bv. trifolii (strain WSM2304), this protein is Large ribosomal subunit protein bL28.